The primary structure comprises 934 residues: Serine/threonine-protein kinase PknD (934 aa).

Residues 4–296 (YELIRLIGRG…ELRKALQPHL (293 aa)) enclose the Protein kinase domain. Residues 10–18 (IGRGGMGEV) and lysine 33 each bind ATP. The active-site Proton acceptor is aspartate 138.

It belongs to the protein kinase superfamily. Ser/Thr protein kinase family. Post-translationally, autophosphorylated on serine and threonine residues.

It catalyses the reaction L-seryl-[protein] + ATP = O-phospho-L-seryl-[protein] + ADP + H(+). The catalysed reaction is L-threonyl-[protein] + ATP = O-phospho-L-threonyl-[protein] + ADP + H(+). Its function is as follows. Together with the serine/threonine kinase Pkn1, may play a role in the specific interactions with host proteins during intracellular growth. This Chlamydia muridarum (strain MoPn / Nigg) protein is Serine/threonine-protein kinase PknD.